Here is a 314-residue protein sequence, read N- to C-terminus: Zinc transporter ZIP3 (314 aa).

Over 1–3 the chain is Extracellular; the sequence is MVK. Residues 4-24 traverse the membrane as a helical segment; the sequence is LLVAKILCMVGVFFFMLLGSL. The Cytoplasmic portion of the chain corresponds to 25–42; it reads LPVKIIETDFEKAHRSKK. The chain crosses the membrane as a helical span at residues 43-63; sequence ILSLCNTFGGGVFLATCFNAL. Residues 64–85 lie on the Extracellular side of the membrane; that stretch reads LPAVREKLQKVLSLGHISTDYP. Residues 86-106 form a helical membrane-spanning segment; it reads LAETILLLGFFMTVFLEQLIL. Over 107–169 the chain is Cytoplasmic; sequence TFRKEKPSFI…QGLSRASPVR (63 aa). Residues Ser125 and Ser129 each carry the phosphoserine modification. A helical membrane pass occupies residues 170–190; it reads LLSLAFALSAHSVFEGLALGL. Over 191-196 the chain is Extracellular; the sequence is QEEGEK. A helical transmembrane segment spans residues 197 to 217; it reads VVSLFVGVAVHETLVAVALGI. The Cytoplasmic portion of the chain corresponds to 218–229; that stretch reads SMARSAMPLRDA. The helical transmembrane segment at 230-250 threads the bilayer; the sequence is AKLAVTVSAMIPLGIGLGLGI. Over 251 to 262 the chain is Extracellular; sequence ESAQGVPGSVAS. A helical membrane pass occupies residues 263–283; that stretch reads VLLQGLAGGTFLFITFLEILA. Residues 284-292 are Cytoplasmic-facing; that stretch reads KELEEKSDR. Residues 293–313 form a helical membrane-spanning segment; it reads LLKVLFLVLGYTVLAGMVFLK. A topological domain (extracellular) is located at residue Trp314.

The protein belongs to the ZIP transporter (TC 2.A.5) family.

It localises to the cell membrane. Its subcellular location is the apical cell membrane. The catalysed reaction is Zn(2+)(in) = Zn(2+)(out). Its function is as follows. Transporter for the divalent cation Zn(2+). Mediates the influx of Zn(2+) into cells from extracellular space. Controls Zn(2+) accumulation into dentate gyrus granule cells in the hippocampus. Mediates Zn(2+) reuptake from the secreted milk within the alveolar lumen. This chain is Zinc transporter ZIP3, found in Homo sapiens (Human).